The primary structure comprises 423 residues: UPF0229 protein VV1_2091 (423 aa).

Residues 81 to 111 (QFITGDKIERPKGGQGGGGAGDGDASADGEG) are disordered. Positions 93–102 (GGQGGGGAGD) are enriched in gly residues.

Belongs to the UPF0229 family.

This Vibrio vulnificus (strain CMCP6) protein is UPF0229 protein VV1_2091.